Here is a 210-residue protein sequence, read N- to C-terminus: Putative tyrosine-protein phosphatase OCA1 (210 aa).

The 161-residue stretch at Asn44–Trp204 folds into the Tyrosine-protein phosphatase domain. The Phosphocysteine intermediate role is filled by Cys140.

This sequence belongs to the protein-tyrosine phosphatase family.

The protein resides in the cytoplasm. The catalysed reaction is O-phospho-L-tyrosyl-[protein] + H2O = L-tyrosyl-[protein] + phosphate. Functionally, putative tyrosine-protein phosphatase required for protection against superoxide stress. The protein is Putative tyrosine-protein phosphatase OCA1 (OCA1) of Kluyveromyces lactis (strain ATCC 8585 / CBS 2359 / DSM 70799 / NBRC 1267 / NRRL Y-1140 / WM37) (Yeast).